The chain runs to 118 residues: D-dopachrome decarboxylase (118 aa).

Pro-2 is modified (N-acetylproline).

This sequence belongs to the MIF family. Homotrimer.

Its subcellular location is the cytoplasm. It carries out the reaction D-dopachrome + H(+) = 5,6-dihydroxyindole + CO2. Tautomerization of D-dopachrome with decarboxylation to give 5,6-dihydroxyindole (DHI). This Xenopus tropicalis (Western clawed frog) protein is D-dopachrome decarboxylase (ddt).